Reading from the N-terminus, the 69-residue chain is Light-harvesting protein B-870 beta chain (69 aa).

Residues 1–2 (MA) constitute a propeptide that is removed on maturation. Residues 3-22 (EVKQESLSGITEGEAKEFHK) are Cytoplasmic-facing. A bacteriochlorophyll-binding residues include histidine 21 and histidine 39. Residues 23 to 45 (IFTSSILVFFGVAAFAHLLVWIW) form a helical membrane-spanning segment. Residues 46–56 (RPWVPGPNGYS) lie on the Periplasmic side of the membrane. A propeptide spanning residues 57–69 (ALETLTQTLTYLS) is cleaved from the precursor.

This sequence belongs to the antenna complex beta subunit family. The core complex is formed by different alpha and beta chains, binding bacteriochlorophyll molecules, and arranged most probably in tetrameric structures disposed around the reaction center. The non-pigmented gamma chains may constitute additional components.

Its subcellular location is the cell inner membrane. Functionally, antenna complexes are light-harvesting systems, which transfer the excitation energy to the reaction centers. This Rhodospirillum rubrum (strain ATCC 11170 / ATH 1.1.1 / DSM 467 / LMG 4362 / NCIMB 8255 / S1) protein is Light-harvesting protein B-870 beta chain.